The chain runs to 79 residues: Putative sulfur carrier protein TM_0983 (79 aa).

Cys17 functions as the Cysteine persulfide intermediate in the catalytic mechanism.

This sequence belongs to the sulfur carrier protein TusA family.

This is Putative sulfur carrier protein TM_0983 from Thermotoga maritima (strain ATCC 43589 / DSM 3109 / JCM 10099 / NBRC 100826 / MSB8).